We begin with the raw amino-acid sequence, 423 residues long: MNKLVIQGGRPLSGTLTASGSKNTSLPIIAATLLHGGGTFTLHRIPNLQDIDTFRQLLHHLGAESSLENNTLTISTANVNSILAPYELVKKMRASIYVLGPLLARFGHARVSLPGGCAFGPRPIDLHLMVMEKLGATITIETGFIDAVAKEGKLRGAHIHFPISSVGATGNALMAAVLAEGTTTLTNAAAEPEIETLCNFLIAMGATIRGVGTTELEIEGTSSLHAVTFNNVFDRIEAGTLLAAAAITGGDITLLEANPRHMKSVLKKFAEAGCTIETTPDSITLKSPETLLPVDVTAKPYPSFPTDMQAQWIALMTQANGTSRITDKVYHERFNHIPELNRLGAGIEIHKNQAIVHGIRKLSGGPVMSTDLRASACLVLAGLVAEGTTEVLRVYHLDRGYENIEMKLRTLGASIERQKYQEF.

22-23 (KN) lines the phosphoenolpyruvate pocket. Position 93 (Arg-93) interacts with UDP-N-acetyl-alpha-D-glucosamine. The active-site Proton donor is the Cys-117. The residue at position 117 (Cys-117) is a 2-(S-cysteinyl)pyruvic acid O-phosphothioketal. UDP-N-acetyl-alpha-D-glucosamine is bound by residues 122–126 (RPIDL), Asp-307, and Val-329.

This sequence belongs to the EPSP synthase family. MurA subfamily.

The protein localises to the cytoplasm. It catalyses the reaction phosphoenolpyruvate + UDP-N-acetyl-alpha-D-glucosamine = UDP-N-acetyl-3-O-(1-carboxyvinyl)-alpha-D-glucosamine + phosphate. It participates in cell wall biogenesis; peptidoglycan biosynthesis. In terms of biological role, cell wall formation. Adds enolpyruvyl to UDP-N-acetylglucosamine. This chain is UDP-N-acetylglucosamine 1-carboxyvinyltransferase, found in Chlorobium chlorochromatii (strain CaD3).